We begin with the raw amino-acid sequence, 472 residues long: Glutamate--tRNA ligase (472 aa).

The short motif at Pro10–Gly20 is the 'HIGH' region element. Residues Cys99, Cys101, Cys126, and His128 each contribute to the Zn(2+) site. The 'KMSKS' region motif lies at Lys238–Arg242. Lys241 lines the ATP pocket.

The protein belongs to the class-I aminoacyl-tRNA synthetase family. Glutamate--tRNA ligase type 1 subfamily. Monomer. The cofactor is Zn(2+).

The protein localises to the cytoplasm. It catalyses the reaction tRNA(Glu) + L-glutamate + ATP = L-glutamyl-tRNA(Glu) + AMP + diphosphate. Its function is as follows. Catalyzes the attachment of glutamate to tRNA(Glu) in a two-step reaction: glutamate is first activated by ATP to form Glu-AMP and then transferred to the acceptor end of tRNA(Glu). The polypeptide is Glutamate--tRNA ligase (Proteus mirabilis (strain HI4320)).